Here is a 356-residue protein sequence, read N- to C-terminus: tRNA-specific 2-thiouridylase MnmA (356 aa).

Residues 6 to 13 (AMSGGVDS) and leucine 32 contribute to the ATP site. The active-site Nucleophile is the cysteine 101. A disulfide bond links cysteine 101 and cysteine 193. Glycine 125 contributes to the ATP binding site. The tract at residues 143-145 (KDQ) is interaction with tRNA. Cysteine 193 functions as the Cysteine persulfide intermediate in the catalytic mechanism.

The protein belongs to the MnmA/TRMU family.

The protein resides in the cytoplasm. The enzyme catalyses S-sulfanyl-L-cysteinyl-[protein] + uridine(34) in tRNA + AH2 + ATP = 2-thiouridine(34) in tRNA + L-cysteinyl-[protein] + A + AMP + diphosphate + H(+). In terms of biological role, catalyzes the 2-thiolation of uridine at the wobble position (U34) of tRNA, leading to the formation of s(2)U34. The chain is tRNA-specific 2-thiouridylase MnmA from Mycolicibacterium smegmatis (strain ATCC 700084 / mc(2)155) (Mycobacterium smegmatis).